We begin with the raw amino-acid sequence, 436 residues long: Glutamyl-tRNA reductase (436 aa).

Residues 49–52 (TCNR), Ser109, 114–116 (EGQ), and Gln120 each bind substrate. The active-site Nucleophile is Cys50. 198–203 (GAGRMS) is an NADP(+) binding site.

The protein belongs to the glutamyl-tRNA reductase family. Homodimer.

The catalysed reaction is (S)-4-amino-5-oxopentanoate + tRNA(Glu) + NADP(+) = L-glutamyl-tRNA(Glu) + NADPH + H(+). Its pathway is porphyrin-containing compound metabolism; protoporphyrin-IX biosynthesis; 5-aminolevulinate from L-glutamyl-tRNA(Glu): step 1/2. It functions in the pathway porphyrin-containing compound metabolism; chlorophyll biosynthesis. In terms of biological role, catalyzes the NADPH-dependent reduction of glutamyl-tRNA(Glu) to glutamate 1-semialdehyde (GSA). The chain is Glutamyl-tRNA reductase from Prochlorococcus marinus (strain AS9601).